Here is a 410-residue protein sequence, read N- to C-terminus: Elongation factor Tu, chloroplastic (410 aa).

One can recognise a tr-type G domain in the interval 10-215; the sequence is KPHVNIGTIG…NVDSYIPTPE (206 aa). Positions 19-26 are G1; that stretch reads GHVDHGKT. Residue 19–26 coordinates GTP; the sequence is GHVDHGKT. Threonine 26 is a binding site for Mg(2+). Residues 61–65 form a G2 region; sequence GITIN. The G3 stretch occupies residues 82–85; that stretch reads DCPG. GTP contacts are provided by residues 82–86 and 137–140; these read DCPGH and NKKD. A G4 region spans residues 137–140; the sequence is NKKD. A G5 region spans residues 175–177; sequence SAL.

The protein belongs to the TRAFAC class translation factor GTPase superfamily. Classic translation factor GTPase family. EF-Tu/EF-1A subfamily.

It localises to the plastid. The protein resides in the chloroplast. It carries out the reaction GTP + H2O = GDP + phosphate + H(+). GTP hydrolase that promotes the GTP-dependent binding of aminoacyl-tRNA to the A-site of ribosomes during protein biosynthesis. The sequence is that of Elongation factor Tu, chloroplastic (tufA) from Oltmannsiellopsis viridis (Marine flagellate).